The chain runs to 345 residues: tRNA N6-adenosine threonylcarbamoyltransferase (345 aa).

Positions 109 and 113 each coordinate Fe cation. Residues 136-140 (TVSGG), Asp169, Gly182, Asp186, and Asn284 each bind substrate. Position 312 (Asp312) interacts with Fe cation.

Belongs to the KAE1 / TsaD family. Fe(2+) serves as cofactor.

It localises to the cytoplasm. The enzyme catalyses L-threonylcarbamoyladenylate + adenosine(37) in tRNA = N(6)-L-threonylcarbamoyladenosine(37) in tRNA + AMP + H(+). In terms of biological role, required for the formation of a threonylcarbamoyl group on adenosine at position 37 (t(6)A37) in tRNAs that read codons beginning with adenine. Is involved in the transfer of the threonylcarbamoyl moiety of threonylcarbamoyl-AMP (TC-AMP) to the N6 group of A37, together with TsaE and TsaB. TsaD likely plays a direct catalytic role in this reaction. This Chlorobium phaeovibrioides (strain DSM 265 / 1930) (Prosthecochloris vibrioformis (strain DSM 265)) protein is tRNA N6-adenosine threonylcarbamoyltransferase.